Consider the following 324-residue polypeptide: 33 kDa ribonucleoprotein, chloroplastic (324 aa).

Residues 1–71 constitute a chloroplast transit peptide; it reads MSGCCFSFAA…YRSSIFLSTC (71 aa). 2 consecutive RRM domains span residues 114–192 and 217–296; these read GRLY…FPEV and HKLY…AGQK. The tract at residues 294–324 is disordered; it reads GQKAPVSSPPVVETSPENDSDNSELLSSLSS. Over residues 298-308 the composition is skewed to low complexity; that stretch reads PVSSPPVVETS.

It localises to the plastid. The protein localises to the chloroplast. Functionally, could be involved in splicing and/or processing of chloroplast RNA's. The sequence is that of 33 kDa ribonucleoprotein, chloroplastic from Nicotiana sylvestris (Wood tobacco).